The sequence spans 503 residues: Maturase K (503 aa).

This sequence belongs to the intron maturase 2 family. MatK subfamily.

The protein localises to the plastid. The protein resides in the chloroplast. Usually encoded in the trnK tRNA gene intron. Probably assists in splicing its own and other chloroplast group II introns. The protein is Maturase K of Psilotum nudum (Whisk fern).